Reading from the N-terminus, the 126-residue chain is uncharacterized protein (126 aa).

This is an uncharacterized protein from Salmonella typhi.